The primary structure comprises 597 residues: Elongation factor 4 (597 aa).

The 183-residue stretch at 2 to 184 folds into the tr-type G domain; the sequence is KHIRNFSIIA…TIVKCIPAPE (183 aa). GTP is bound by residues 14–19 and 131–134; these read DHGKST and NKID.

This sequence belongs to the TRAFAC class translation factor GTPase superfamily. Classic translation factor GTPase family. LepA subfamily.

The protein localises to the cell inner membrane. The enzyme catalyses GTP + H2O = GDP + phosphate + H(+). Its function is as follows. Required for accurate and efficient protein synthesis under certain stress conditions. May act as a fidelity factor of the translation reaction, by catalyzing a one-codon backward translocation of tRNAs on improperly translocated ribosomes. Back-translocation proceeds from a post-translocation (POST) complex to a pre-translocation (PRE) complex, thus giving elongation factor G a second chance to translocate the tRNAs correctly. Binds to ribosomes in a GTP-dependent manner. This is Elongation factor 4 from Aliivibrio salmonicida (strain LFI1238) (Vibrio salmonicida (strain LFI1238)).